The sequence spans 411 residues: Isocitrate dehydrogenase [NADP] peroxisomal (411 aa).

NADP(+) is bound by residues 78–80 (TIT) and arginine 85. Threonine 80 contacts substrate. Substrate contacts are provided by residues 97-103 (SPNGTLR), arginine 112, and arginine 135. Position 254 (aspartate 254) interacts with Mn(2+). An NADP(+)-binding site is contributed by lysine 262. Mn(2+) is bound at residue aspartate 277. Residues 312-317 (GTVTRH) and asparagine 330 contribute to the NADP(+) site.

It belongs to the isocitrate and isopropylmalate dehydrogenases family. The cofactor is Mg(2+). Requires Mn(2+) as cofactor.

It localises to the peroxisome. The enzyme catalyses D-threo-isocitrate + NADP(+) = 2-oxoglutarate + CO2 + NADPH. Functionally, may play a role in N-alkane metabolism, glutamate synthesis, and/or NADPH generation in the peroxisomes. This chain is Isocitrate dehydrogenase [NADP] peroxisomal (IDP2), found in Candida tropicalis (Yeast).